Here is a 790-residue protein sequence, read N- to C-terminus: Nuclear cap-binding protein subunit 1 (790 aa).

A disordered region spans residues 1-26; that stretch reads MSRRRHSYENDGGQPHKRRKTSDANE. The short motif at 3 to 20 is the Nuclear localization signal element; that stretch reads RRRHSYENDGGQPHKRRK. The residue at position 7 (serine 7) is a Phosphoserine. Threonine 21 carries the phosphothreonine modification. Phosphoserine is present on residues serine 22 and serine 201. The region spanning 28–240 is the MIF4G domain; sequence EDHLESLICK…CLWAQIQKLK (213 aa). N6-acetyllysine is present on lysine 204. Residues 643–713 adopt a coiled-coil conformation; that stretch reads STIRKMNKHV…SEQKNLFLVI (71 aa). Residues 666-685 are disordered; that stretch reads LARQHKRRSDDDDRSSDRKD. Lysine 684 participates in a covalent cross-link: Glycyl lysine isopeptide (Lys-Gly) (interchain with G-Cter in SUMO2). N6-acetyllysine is present on lysine 698.

Belongs to the NCBP1 family. As to quaternary structure, component of the nuclear cap-binding complex (CBC), a heterodimer composed of NCBP1/CBP80 and NCBP2/CBP20 that interacts with m7GpppG-capped RNA. Found in a U snRNA export complex containing PHAX/RNUXA, NCBP1/CBP80, NCBP2/CBP20, RAN, XPO1 and m7G-capped RNA. Identified in a IGF2BP1-dependent mRNP granule complex containing untranslated mRNAs. Interacts with PHAX/RNUXA, SRRT/ARS2, EIF4G2, IGF2BP1, HNRNPF, HNRNPH1, KIAA0427/CTIF, PARN, DROSHA, UPF1 and ALYREF/THOC4. May interact with EIF4G1; the interaction is however controversial. The large PER complex involved in the repression of transcriptional termination is composed of at least PER2, CDK9, DDX5, DHX9, NCBP1/CBP80 and POLR2A (active). Component of an alternative nuclear cap-binding complex (CBC) composed of NCBP1/CBP80 and NCBP3. Interacts with METTL3. Interacts with ZFC3H1 in a RNase-insensitive manner. Interacts with MTREX. Interacts with TASOR. Interacts with DHX34; the interaction is RNA-dependent. Interacts with KPNA3. In terms of processing, dephosphorylated at Thr-21 by the PNUTS-PP1 complex during RNA polymerase II transcription pause-release. Expressed in the spermatogonia, spermatocytes and granular cells within the cerebellum.

It localises to the nucleus. Its subcellular location is the cytoplasm. Component of the cap-binding complex (CBC), which binds cotranscriptionally to the 5'-cap of pre-mRNAs and is involved in various processes such as pre-mRNA splicing, translation regulation, nonsense-mediated mRNA decay, RNA-mediated gene silencing (RNAi) by microRNAs (miRNAs) and mRNA export. The CBC complex is involved in mRNA export from the nucleus via its interaction with ALYREF/THOC4/ALY, leading to the recruitment of the mRNA export machinery to the 5'-end of mRNA and to mRNA export in a 5' to 3' direction through the nuclear pore. The CBC complex is also involved in mediating U snRNA and intronless mRNAs export from the nucleus. The CBC complex is essential for a pioneer round of mRNA translation, before steady state translation when the CBC complex is replaced by cytoplasmic cap-binding protein eIF4E. The pioneer round of mRNA translation mediated by the CBC complex plays a central role in nonsense-mediated mRNA decay (NMD), NMD only taking place in mRNAs bound to the CBC complex, but not on eIF4E-bound mRNAs. The CBC complex enhances NMD in mRNAs containing at least one exon-junction complex (EJC) via its interaction with UPF1, promoting the interaction between UPF1 and UPF2. The CBC complex is also involved in 'failsafe' NMD, which is independent of the EJC complex, while it does not participate in Staufen-mediated mRNA decay (SMD). During cell proliferation, the CBC complex is also involved in microRNAs (miRNAs) biogenesis via its interaction with SRRT/ARS2 and is required for miRNA-mediated RNA interference. The CBC complex also acts as a negative regulator of PARN, thereby acting as an inhibitor of mRNA deadenylation. In the CBC complex, NCBP1/CBP80 does not bind directly capped RNAs (m7GpppG-capped RNA) but is required to stabilize the movement of the N-terminal loop of NCBP2/CBP20 and lock the CBC into a high affinity cap-binding state with the cap structure. Associates with NCBP3 to form an alternative cap-binding complex (CBC) which plays a key role in mRNA export and is particularly important in cellular stress situations such as virus infections. The conventional CBC with NCBP2 binds both small nuclear RNA (snRNA) and messenger (mRNA) and is involved in their export from the nucleus whereas the alternative CBC with NCBP3 does not bind snRNA and associates only with mRNA thereby playing a role only in mRNA export. NCBP1/CBP80 is required for cell growth and viability. This is Nuclear cap-binding protein subunit 1 (Ncbp1) from Mus musculus (Mouse).